The following is a 325-amino-acid chain: Lipoyl synthase (325 aa).

Positions 1 to 33 (MATVIDTLKARGSEDRAARHPEKQNRPDTPVLR) are disordered. Basic and acidic residues predominate over residues 8 to 33 (LKARGSEDRAARHPEKQNRPDTPVLR). [4Fe-4S] cluster is bound by residues C64, C69, C75, C90, C94, C97, and S303. Residues 76–292 (WSQKHATMMI…EAIARAKGFL (217 aa)) form the Radical SAM core domain.

It belongs to the radical SAM superfamily. Lipoyl synthase family. [4Fe-4S] cluster serves as cofactor.

It is found in the cytoplasm. It carries out the reaction [[Fe-S] cluster scaffold protein carrying a second [4Fe-4S](2+) cluster] + N(6)-octanoyl-L-lysyl-[protein] + 2 oxidized [2Fe-2S]-[ferredoxin] + 2 S-adenosyl-L-methionine + 4 H(+) = [[Fe-S] cluster scaffold protein] + N(6)-[(R)-dihydrolipoyl]-L-lysyl-[protein] + 4 Fe(3+) + 2 hydrogen sulfide + 2 5'-deoxyadenosine + 2 L-methionine + 2 reduced [2Fe-2S]-[ferredoxin]. Its pathway is protein modification; protein lipoylation via endogenous pathway; protein N(6)-(lipoyl)lysine from octanoyl-[acyl-carrier-protein]: step 2/2. Catalyzes the radical-mediated insertion of two sulfur atoms into the C-6 and C-8 positions of the octanoyl moiety bound to the lipoyl domains of lipoate-dependent enzymes, thereby converting the octanoylated domains into lipoylated derivatives. The sequence is that of Lipoyl synthase from Caulobacter vibrioides (strain ATCC 19089 / CIP 103742 / CB 15) (Caulobacter crescentus).